The chain runs to 674 residues: 1,4-alpha-glucan branching enzyme GlgB 1 (674 aa).

Catalysis depends on Asp336, which acts as the Nucleophile. The active-site Proton donor is Glu389.

It belongs to the glycosyl hydrolase 13 family. GlgB subfamily. In terms of assembly, monomer.

It carries out the reaction Transfers a segment of a (1-&gt;4)-alpha-D-glucan chain to a primary hydroxy group in a similar glucan chain.. It participates in glycan biosynthesis; glycogen biosynthesis. In terms of biological role, catalyzes the formation of the alpha-1,6-glucosidic linkages in glycogen by scission of a 1,4-alpha-linked oligosaccharide from growing alpha-1,4-glucan chains and the subsequent attachment of the oligosaccharide to the alpha-1,6 position. The protein is 1,4-alpha-glucan branching enzyme GlgB 1 (glgB1) of Clostridium perfringens (strain 13 / Type A).